Consider the following 269-residue polypeptide: GTP cyclohydrolase FolE2 (269 aa).

This sequence belongs to the GTP cyclohydrolase IV family.

The enzyme catalyses GTP + H2O = 7,8-dihydroneopterin 3'-triphosphate + formate + H(+). It functions in the pathway cofactor biosynthesis; 7,8-dihydroneopterin triphosphate biosynthesis; 7,8-dihydroneopterin triphosphate from GTP: step 1/1. Converts GTP to 7,8-dihydroneopterin triphosphate. The sequence is that of GTP cyclohydrolase FolE2 from Burkholderia mallei (strain NCTC 10229).